The chain runs to 375 residues: PGHPPGIDTPNPQWFWTLLQRNQMPARLLSKEDIETITAIKRFSDEYSAINFINLTPNNIGELAQFYFANLVLKYCDHSQYFINGLTAIVVGSRRPRDPAAVLAWIDRTINGAADVEPAAQEVLQRLGSNPAAWTGTFTSTNMVRYVMDQRPMVVIGLSISKYNGSAGNNRVFQAGNWNGLNGGKNVCPLMAFDRTRRFVLACPRVGFTCEAGGFGTGVRENTLSEQVRGIVSEGGPMVQTAVFAAVLHALGARTQHLAVDDWIGLVDDEFLAASLDALNATVVDQFGEWSVEAAQELVKNMEAQTTAGAVAAGEGAFDFGACVGDTPQQSTSAFNGGLAMAAAPAGQKRSLPDDILFDMGAPPEKKSGLTFDML.

Belongs to the herpesviridae DNA-binding protein family.

Its subcellular location is the host nucleus. Single-stranded DNA-binding protein required for DNA replication. The protein is Major DNA-binding protein of Equine herpesvirus 1 (strain HVS25A) (EHV-1).